We begin with the raw amino-acid sequence, 1500 residues long: Carbamoyl-phosphate synthase [ammonia], mitochondrial (1500 aa).

The transit peptide at 1 to 38 directs the protein to the mitochondrion; the sequence is MTRILTACKVVKTLKSGFGLANVTSKRQWDFSRPGIRL. The segment at 39 to 218 is anthranilate phosphoribosyltransferase homolog; it reads LSVKAQTAHI…VKVFGKGNPT (180 aa). Residues Lys55, Lys57, and Lys119 each carry the N6-acetyllysine; alternate modification. At Lys55 the chain carries N6-glutaryllysine; alternate. N6-succinyllysine; alternate is present on residues Lys55, Lys57, and Lys119. Ser148 carries the phosphoserine modification. An N6-acetyllysine; alternate mark is found at Lys157 and Lys171. Residue Lys157 is modified to N6-succinyllysine; alternate. Lys171 bears the N6-glutaryllysine; alternate mark. Lys176 is subject to N6-glutaryllysine. An N6-acetyllysine modification is found at Lys182. At Ser189 the chain carries Phosphoserine. Position 197 is an N6-acetyllysine (Lys197). 5 positions are modified to N6-acetyllysine; alternate: Lys207, Lys210, Lys214, Lys219, and Lys228. An N6-glutaryllysine; alternate mark is found at Lys207, Lys210, Lys214, Lys219, and Lys228. Position 207 is an N6-succinyllysine; alternate (Lys207). N6-succinyllysine; alternate is present on Lys214. The 186-residue stretch at 219–404 folds into the Glutamine amidotransferase type-1 domain; it reads KVVAVDCGIK…FSLIKKGKGT (186 aa). Lys237 carries the post-translational modification N6-glutaryllysine. N6-acetyllysine is present on Lys279. N6-acetyllysine; alternate occurs at positions 280, 287, 307, and 310. At Lys280 the chain carries N6-glutaryllysine; alternate. Residues Lys287 and Lys307 each carry the N6-succinyllysine; alternate modification. 2 positions are modified to N6-glutaryllysine; alternate: Lys307 and Lys310. An N6-succinyllysine modification is found at Lys400. An N6-glutaryllysine; alternate mark is found at Lys402, Lys412, Lys453, and Lys458. N6-succinyllysine; alternate occurs at positions 402 and 412. N6-acetyllysine; alternate occurs at positions 412, 453, 458, 522, 527, and 532. An N6-succinyllysine; alternate mark is found at Lys458, Lys522, and Lys527. 2 positions are modified to N6-glutaryllysine; alternate: Lys527 and Lys532. Ser537 is modified (phosphoserine; alternate). O-linked (GlcNAc) serine; alternate glycosylation occurs at Ser537. Ser540 carries the post-translational modification Phosphoserine. Positions 551-743 constitute an ATP-grasp 1 domain; sequence SDKLNEINEK…LAFIAAKIAL (193 aa). 2 positions are modified to N6-acetyllysine; alternate: Lys553 and Lys560. Lys553 carries the N6-glutaryllysine; alternate modification. An N6-succinyllysine; alternate mark is found at Lys553 and Lys560. Ser569 carries the phosphoserine modification. N6-acetyllysine; alternate is present on residues Lys575, Lys603, and Lys612. N6-succinyllysine; alternate occurs at positions 575, 603, and 612. N6-acetyllysine is present on Lys630. Residue Lys728 is modified to N6-glutaryllysine. An N6-acetyllysine; alternate mark is found at Lys751, Lys757, Lys772, Lys793, Lys811, Lys831, Lys841, and Lys856. Lys751 and Lys757 each carry N6-succinyllysine; alternate. N6-glutaryllysine; alternate is present on residues Lys757, Lys772, Lys793, and Lys811. Lys793 is subject to N6-succinyllysine; alternate. Position 831 is an N6-succinyllysine; alternate (Lys831). An N6-glutaryllysine; alternate mark is found at Lys841 and Lys856. Lys869 is modified (N6-glutaryllysine). N6-acetyllysine; alternate is present on residues Lys875, Lys889, and Lys892. Residues Lys875, Lys889, and Lys892 each carry the N6-glutaryllysine; alternate modification. 3 positions are modified to N6-succinyllysine; alternate: Lys875, Lys889, and Lys892. Phosphoserine occurs at positions 896 and 898. Residues Lys908, Lys915, and Lys919 each carry the N6-acetyllysine; alternate modification. N6-glutaryllysine; alternate occurs at positions 908, 915, and 919. 2 positions are modified to N6-succinyllysine; alternate: Lys915 and Lys919. N6-acetyllysine is present on Lys935. Ser1036 carries the post-translational modification Phosphoserine. Lys1074 is subject to N6-acetyllysine; alternate. Residue Lys1074 is modified to N6-glutaryllysine; alternate. Residue Lys1074 is modified to N6-succinyllysine; alternate. Phosphoserine is present on residues Ser1079, Ser1090, and Ser1093. The ATP-grasp 2 domain occupies 1093 to 1284; sequence SAVLDELKVA…FIDVATKVMI (192 aa). Lys1100 is subject to N6-acetyllysine; alternate. Lys1100 carries the post-translational modification N6-succinyllysine; alternate. Position 1149 is an N6-succinyllysine (Lys1149). An N6-acetyllysine; alternate mark is found at Lys1168 and Lys1183. 2 positions are modified to N6-glutaryllysine; alternate: Lys1168 and Lys1183. N6-succinyllysine; alternate is present on residues Lys1168 and Lys1183. A Phosphoserine modification is found at Ser1203. An N6-acetyllysine modification is found at Lys1222. Residue Lys1224 is modified to N6-glutaryllysine. Residues Lys1232, Lys1269, and Lys1291 each carry the N6-acetyllysine; alternate modification. An N6-succinyllysine; alternate mark is found at Lys1232, Lys1269, and Lys1291. An O-linked (GlcNAc) serine glycan is attached at Ser1331. Thr1332 carries an O-linked (GlcNAc) threonine glycan. One can recognise an MGS-like domain in the interval 1355-1500; the sequence is FKIPQKGILI…YRQYSAGKAA (146 aa). An N6-acetyllysine; alternate modification is found at Lys1356. 2 positions are modified to N6-glutaryllysine; alternate: Lys1356 and Lys1360. Residues Lys1356 and Lys1360 each carry the N6-succinyllysine; alternate modification. Thr1391, Thr1394, and Trp1410 together coordinate N-acetyl-L-glutamate. A phosphoserine mark is found at Ser1419 and Ser1431. Asn1437 and Asn1440 together coordinate N-acetyl-L-glutamate. Lys1444 bears the N6-acetyllysine; alternate mark. Lys1444 carries the N6-succinyllysine; alternate modification. Position 1449 (Asn1449) interacts with N-acetyl-L-glutamate. Lys1471, Lys1479, and Lys1486 each carry N6-acetyllysine; alternate. Lys1471, Lys1479, and Lys1486 each carry N6-succinyllysine; alternate. Lys1479 and Lys1486 each carry N6-glutaryllysine; alternate.

Can form homooligomers (monomers as predominant form and dimers). 50% of the mature protein that was isolated had Leu-39 as its N-terminal residue and 50% had Ser-40 suggesting two adjacent processing sites. However, the possibility of proteolytic removal of Leu-39 during the isolation of the enzyme cannot be excluded. Undergoes proteolytic cleavage in the C-terminal region corresponding to the loss of approximately 12 AA residues from the C-terminus. Post-translationally, succinylated at Lys-287 and Lys-1291. Desuccinylated at Lys-1291 by SIRT5, leading to activation. In terms of processing, glutarylated. Glutarylation levels increase during fasting. Deglutarylated by SIRT5 at Lys-55, Lys-219, Lys-412, Lys-889, Lys-892, Lys-915, Lys-1360 and Lys-1486, leading to activation. In terms of tissue distribution, primarily in the liver and small intestine.

Its subcellular location is the mitochondrion. It is found in the nucleus. It localises to the nucleolus. The protein resides in the cell membrane. It catalyses the reaction hydrogencarbonate + NH4(+) + 2 ATP = carbamoyl phosphate + 2 ADP + phosphate + 2 H(+). Its activity is regulated as follows. Requires N-acetyl-L-glutamate (NAG) as an allosteric activator. N-acetyl-L-beta-phenylglutamate (Phe-NAG) can also activate CPSase I, but with an activation constant that is 2-fold higher than that for NAG. In terms of biological role, involved in the urea cycle of ureotelic animals where the enzyme plays an important role in removing excess ammonia from the cell. The chain is Carbamoyl-phosphate synthase [ammonia], mitochondrial (Cps1) from Rattus norvegicus (Rat).